A 327-amino-acid chain; its full sequence is Tartrate-resistant acid phosphatase type 5 (327 aa).

An N-terminal signal peptide occupies residues 1-22; the sequence is MDTWMVLLGLQILLLPLLAHCT. Fe cation contacts are provided by Asp-35, Asp-73, Tyr-76, and Asn-112. Asn-118 and Asn-149 each carry an N-linked (GlcNAc...) asparagine glycan. A disulfide bridge connects residues Cys-163 and Cys-221. Fe cation-binding residues include His-207, His-242, and His-244.

As to quaternary structure, exists either as monomer or, after proteolytic processing, as a dimer of two chains linked by disulfide bond(s). Fe cation is required as a cofactor. As to expression, characteristic constituent of osteoclasts and some mononuclear preosteoclasts. Preferentially expressed in skeletal tissues.

It is found in the lysosome. The enzyme catalyses a phosphate monoester + H2O = an alcohol + phosphate. Functionally, may play a role in the process of bone resorption. The osteoclastic trap acts on nucleotide tri- and diphosphates with higher affinity, compared with other substrates. The sequence is that of Tartrate-resistant acid phosphatase type 5 (Acp5) from Rattus norvegicus (Rat).